The following is a 233-amino-acid chain: Large ribosomal subunit protein uL1 (233 aa).

Belongs to the universal ribosomal protein uL1 family. Part of the 50S ribosomal subunit.

Its function is as follows. Binds directly to 23S rRNA. The L1 stalk is quite mobile in the ribosome, and is involved in E site tRNA release. In terms of biological role, protein L1 is also a translational repressor protein, it controls the translation of the L11 operon by binding to its mRNA. The protein is Large ribosomal subunit protein uL1 of Pelobacter propionicus (strain DSM 2379 / NBRC 103807 / OttBd1).